Reading from the N-terminus, the 346-residue chain is Golgi-associated RAB2 interactor protein 2 (346 aa).

The disordered stretch occupies residues 275 to 346 (TPVESEANTS…EKHVRQPKDF (72 aa)). Basic and acidic residues-rich tracts occupy residues 283–297 (TSKE…EKTP) and 334–346 (KLVE…PKDF).

This sequence belongs to the GARIN family. As to quaternary structure, interacts with CALM1.

The protein resides in the cell projection. It localises to the cilium. Its subcellular location is the flagellum. Functionally, seems to play a role in sperm motility. This is Golgi-associated RAB2 interactor protein 2 (GARIN2) from Macaca fascicularis (Crab-eating macaque).